The following is a 329-amino-acid chain: GMP reductase (329 aa).

The active-site Thioimidate intermediate is the C178. NADP(+) is bound at residue 207–230 (VIADGGIRTHGDIAKSIRMGATMV).

Belongs to the IMPDH/GMPR family. GuaC type 2 subfamily.

The enzyme catalyses IMP + NH4(+) + NADP(+) = GMP + NADPH + 2 H(+). In terms of biological role, catalyzes the irreversible NADPH-dependent deamination of GMP to IMP. It functions in the conversion of nucleobase, nucleoside and nucleotide derivatives of G to A nucleotides, and in maintaining the intracellular balance of A and G nucleotides. This chain is GMP reductase, found in Lactococcus lactis subsp. lactis (strain IL1403) (Streptococcus lactis).